The chain runs to 429 residues: uncharacterized protein (429 aa).

The span at 1 to 12 shows a compositional bias: basic and acidic residues; that stretch reads MSDSKEDIRNGQ. Disordered regions lie at residues 1 to 63, 257 to 306, and 320 to 429; these read MSDS…APEA, RSRA…SDRM, and YRGY…SDSE. Residues 328–362 are compositionally biased toward acidic residues; sequence EENEEDDLGDFIAEEEEEEEQEEEQEEDEEDEEEV. Basic and acidic residues predominate over residues 369–378; it reads KGFDADKEAS.

It belongs to the LEO1 family.

Its subcellular location is the nucleus. This is an uncharacterized protein from Schizosaccharomyces pombe (strain 972 / ATCC 24843) (Fission yeast).